The sequence spans 92 residues: UPF0223 protein SPy_1248/M5005_Spy0958 (92 aa).

Belongs to the UPF0223 family.

The polypeptide is UPF0223 protein SPy_1248/M5005_Spy0958 (Streptococcus pyogenes serotype M1).